The following is a 364-amino-acid chain: 3-dehydroquinate synthase (364 aa).

Residues 105–109, 129–130, K142, and K151 contribute to the NAD(+) site; these read GVVGD and TT. Residues E184, H247, and H264 each coordinate Zn(2+).

Belongs to the sugar phosphate cyclases superfamily. Dehydroquinate synthase family. Co(2+) serves as cofactor. It depends on Zn(2+) as a cofactor. The cofactor is NAD(+).

Its subcellular location is the cytoplasm. The enzyme catalyses 7-phospho-2-dehydro-3-deoxy-D-arabino-heptonate = 3-dehydroquinate + phosphate. Its pathway is metabolic intermediate biosynthesis; chorismate biosynthesis; chorismate from D-erythrose 4-phosphate and phosphoenolpyruvate: step 2/7. Functionally, catalyzes the conversion of 3-deoxy-D-arabino-heptulosonate 7-phosphate (DAHP) to dehydroquinate (DHQ). The polypeptide is 3-dehydroquinate synthase (Acidithiobacillus ferrooxidans (strain ATCC 23270 / DSM 14882 / CIP 104768 / NCIMB 8455) (Ferrobacillus ferrooxidans (strain ATCC 23270))).